The primary structure comprises 392 residues: Small ribosomal subunit protein uS9m (392 aa).

Residues 8 to 25 show a composition bias toward low complexity; it reads RSSRAMSSASPASASDSD. Residues 8–27 form a disordered region; that stretch reads RSSRAMSSASPASASDSDTS.

It belongs to the universal ribosomal protein uS9 family. Component of the mitochondrial ribosome small subunit (28S) which comprises a 12S rRNA and about 30 distinct proteins.

It is found in the mitochondrion. The polypeptide is Small ribosomal subunit protein uS9m (mrps-9) (Caenorhabditis elegans).